Consider the following 256-residue polypeptide: Thiazole synthase (256 aa).

The active-site Schiff-base intermediate with DXP is the Lys-95. 1-deoxy-D-xylulose 5-phosphate contacts are provided by residues Gly-156, 182–183 (AG), and 204–205 (NT).

It belongs to the ThiG family. As to quaternary structure, homotetramer. Forms heterodimers with either ThiH or ThiS.

It localises to the cytoplasm. The enzyme catalyses [ThiS sulfur-carrier protein]-C-terminal-Gly-aminoethanethioate + 2-iminoacetate + 1-deoxy-D-xylulose 5-phosphate = [ThiS sulfur-carrier protein]-C-terminal Gly-Gly + 2-[(2R,5Z)-2-carboxy-4-methylthiazol-5(2H)-ylidene]ethyl phosphate + 2 H2O + H(+). The protein operates within cofactor biosynthesis; thiamine diphosphate biosynthesis. Its function is as follows. Catalyzes the rearrangement of 1-deoxy-D-xylulose 5-phosphate (DXP) to produce the thiazole phosphate moiety of thiamine. Sulfur is provided by the thiocarboxylate moiety of the carrier protein ThiS. In vitro, sulfur can be provided by H(2)S. This Idiomarina loihiensis (strain ATCC BAA-735 / DSM 15497 / L2-TR) protein is Thiazole synthase.